Reading from the N-terminus, the 192-residue chain is Casparian strip membrane protein 4 (192 aa).

The Cytoplasmic segment spans residues Met-1–Ala-29. A helical transmembrane segment spans residues Val-30 to Ile-50. The Extracellular segment spans residues Ser-51–Thr-79. N-linked (GlcNAc...) asparagine glycosylation occurs at Asn-56. The helical transmembrane segment at Phe-80–Ile-100 threads the bilayer. Residues Val-101–Arg-112 lie on the Cytoplasmic side of the membrane. A helical transmembrane segment spans residues Leu-113–Ala-133. The Extracellular portion of the chain corresponds to Ala-134–Ser-166. The helical transmembrane segment at Leu-167–Ala-187 threads the bilayer. Topologically, residues Leu-188–His-192 are cytoplasmic.

The protein belongs to the Casparian strip membrane proteins (CASP) family. As to quaternary structure, homodimer and heterodimers.

Its subcellular location is the cell membrane. Regulates membrane-cell wall junctions and localized cell wall deposition. Required for establishment of the Casparian strip membrane domain (CSD) and the subsequent formation of Casparian strips, a cell wall modification of the root endodermis that determines an apoplastic barrier between the intraorganismal apoplasm and the extraorganismal apoplasm and prevents lateral diffusion. The protein is Casparian strip membrane protein 4 of Sorghum bicolor (Sorghum).